The sequence spans 319 residues: Adenosine receptor A3 (319 aa).

The Extracellular segment spans residues 1–15 (MEADNTTETDWLNIT). N-linked (GlcNAc...) asparagine glycans are attached at residues Asn-5 and Asn-13. A helical transmembrane segment spans residues 16–38 (YITMEAAIGLCAVVGNMLVIWVV). Residues 39–49 (KLNPTLRTTTV) lie on the Cytoplasmic side of the membrane. A helical transmembrane segment spans residues 50–73 (YFIVSLALADIAVGVLVIPLAIAV). The Extracellular portion of the chain corresponds to 74-85 (SLQVKMHFYACL). A disulfide bond links Cys-84 and Cys-167. The helical transmembrane segment at 86 to 107 (FMSCVLLIFTHASIMSLLAIAV) threads the bilayer. At 108-127 (HRYLRVKLTVRYRTVTTQRR) the chain is on the cytoplasmic side. The helical transmembrane segment at 128–149 (IWLFLGLCWLVSFLVGLTPMFG) threads the bilayer. Topologically, residues 150–178 (WNRKATLASSQNSSTLLCHFRSVVSLDYM) are extracellular. Asn-161 carries an N-linked (GlcNAc...) asparagine glycan. A helical membrane pass occupies residues 179 to 199 (VFFSFITWILVPLVVMCIIYL). The Cytoplasmic portion of the chain corresponds to 200–232 (DIFYIIRNKLSQNLTGFRETRAFYGREFKTAKS). The chain crosses the membrane as a helical span at residues 233–256 (LFLVLFLFALCWLPLSIINFVSYF). Over 257 to 262 (DVKIPD) the chain is Extracellular. The helical transmembrane segment at 263–285 (VAMCLGILLSHANSMMNPIVYAC) threads the bilayer. The Cytoplasmic portion of the chain corresponds to 286–319 (KIKKFKETYFLILRAVRLCQTSDSLDSNMEQTTE). Cys-304 carries S-palmitoyl cysteine lipidation.

Belongs to the G-protein coupled receptor 1 family. Post-translationally, phosphorylation on Thr-317 and Thr-318 may be crucial for rapid desensitization. Phosphorylation on Thr-317 may be necessary for phosphorylation on Thr-318 to occur.

Its subcellular location is the cell membrane. Its function is as follows. Receptor for adenosine. The activity of this receptor is mediated by G proteins which inhibits adenylyl cyclase. This chain is Adenosine receptor A3 (Adora3), found in Mus musculus (Mouse).